We begin with the raw amino-acid sequence, 227 residues long: 27 kDa glycoprotein (227 aa).

A signal peptide spans 1 to 17 (MMWKTVLITIFAAGVLA). Residues Asn-118 and Asn-173 are each glycosylated (N-linked (GlcNAc...) asparagine).

Belongs to the UPF0408 family. As to expression, expressed in the subesophageal body, fat bodies, hemocytes, midgut and Malpighian tubules. Not expressed in silk glands.

Its subcellular location is the secreted. The sequence is that of 27 kDa glycoprotein from Bombyx mori (Silk moth).